Reading from the N-terminus, the 93-residue chain is Large ribosomal subunit protein uL23cz/uL23cy (93 aa).

Belongs to the universal ribosomal protein uL23 family. In terms of assembly, part of the 50S ribosomal subunit.

It localises to the plastid. Its subcellular location is the chloroplast. Its function is as follows. Binds to 23S rRNA. The sequence is that of Large ribosomal subunit protein uL23cz/uL23cy (rpl23-A) from Cucumis sativus (Cucumber).